Consider the following 380-residue polypeptide: Queuine tRNA-ribosyltransferase (380 aa).

Residue Asp-96 is the Proton acceptor of the active site. Substrate is bound by residues 96–100, Asp-150, Gln-193, and Gly-220; that span reads DSGGF. Positions 251-257 are RNA binding; that stretch reads GVGAPDS. The active-site Nucleophile is Asp-270. The RNA binding; important for wobble base 34 recognition stretch occupies residues 275–279; the sequence is TRIAR. Zn(2+) is bound by residues Cys-308, Cys-310, Cys-313, and His-339.

Belongs to the queuine tRNA-ribosyltransferase family. Homodimer. Within each dimer, one monomer is responsible for RNA recognition and catalysis, while the other monomer binds to the replacement base PreQ1. It depends on Zn(2+) as a cofactor.

The enzyme catalyses 7-aminomethyl-7-carbaguanine + guanosine(34) in tRNA = 7-aminomethyl-7-carbaguanosine(34) in tRNA + guanine. It functions in the pathway tRNA modification; tRNA-queuosine biosynthesis. Catalyzes the base-exchange of a guanine (G) residue with the queuine precursor 7-aminomethyl-7-deazaguanine (PreQ1) at position 34 (anticodon wobble position) in tRNAs with GU(N) anticodons (tRNA-Asp, -Asn, -His and -Tyr). Catalysis occurs through a double-displacement mechanism. The nucleophile active site attacks the C1' of nucleotide 34 to detach the guanine base from the RNA, forming a covalent enzyme-RNA intermediate. The proton acceptor active site deprotonates the incoming PreQ1, allowing a nucleophilic attack on the C1' of the ribose to form the product. After dissociation, two additional enzymatic reactions on the tRNA convert PreQ1 to queuine (Q), resulting in the hypermodified nucleoside queuosine (7-(((4,5-cis-dihydroxy-2-cyclopenten-1-yl)amino)methyl)-7-deazaguanosine). The polypeptide is Queuine tRNA-ribosyltransferase (Streptococcus pneumoniae (strain P1031)).